The following is a 310-amino-acid chain: Forkhead box protein pes-1 (310 aa).

Residues 1 to 16 (MLPLSISTSPDPASQF) show a composition bias toward polar residues. Disordered regions lie at residues 1–37 (MLPLSISTSPDPASQFPTVPDLPTLTPTPSPTSGTAK), 58–77 (VSPSSTGLLEPKSSTVSPAP), 92–126 (KQSSSGVSSTRTSSLEPKSSAVSPAPSSPEASNPN), and 217–242 (SLRRKKNGKPRKYSKRSNTVSNPNPI). A compositionally biased stretch (low complexity) spans 17–35 (PTVPDLPTLTPTPSPTSGT). Positions 128-220 (RPAYSYNALI…IGKDCGSLRR (93 aa)) form a DNA-binding region, fork-head. A compositionally biased stretch (basic residues) spans 218 to 231 (LRRKKNGKPRKYSK).

It localises to the nucleus. The protein localises to the cytoplasm. Its function is as follows. Transcription factor. Plays a role in embryogenesis and later development, perhaps acting redundantly with forkhead protein fkh-2. This chain is Forkhead box protein pes-1, found in Caenorhabditis briggsae.